A 235-amino-acid chain; its full sequence is MQNADPKELAKFSELAHKWWDPESEFRPLHQINPLRLNWIEQTVGKLDGLKVLDVGCGGGILSEAMAQRGAQVLGIDLAERSLKVAQLHALESGQTRVEYREIAAEALAAEQPARYDVVTCMEMVEHVPDPASIVQACSQLVKPGGWVFLSTINRNPKSFLLAIVGAEYVLKMLPAGTHEYAKFIRPSELLRWCRDTGLDLRHTRGMEYNPLTRRYWLSADTSVNYLVACRKETA.

The S-adenosyl-L-methionine site is built by Arg-36, Gly-56, Asp-77, and Met-122.

Belongs to the methyltransferase superfamily. UbiG/COQ3 family.

The enzyme catalyses a 3-demethylubiquinol + S-adenosyl-L-methionine = a ubiquinol + S-adenosyl-L-homocysteine + H(+). It catalyses the reaction a 3-(all-trans-polyprenyl)benzene-1,2-diol + S-adenosyl-L-methionine = a 2-methoxy-6-(all-trans-polyprenyl)phenol + S-adenosyl-L-homocysteine + H(+). It functions in the pathway cofactor biosynthesis; ubiquinone biosynthesis. Its function is as follows. O-methyltransferase that catalyzes the 2 O-methylation steps in the ubiquinone biosynthetic pathway. The polypeptide is Ubiquinone biosynthesis O-methyltransferase (Leptothrix cholodnii (strain ATCC 51168 / LMG 8142 / SP-6) (Leptothrix discophora (strain SP-6))).